A 192-amino-acid chain; its full sequence is T-cell surface glycoprotein CD3 epsilon chain (192 aa).

Positions 1 to 21 (MQTGNLWQVLGLCLLLVGAWA) are cleaved as a signal peptide. The Extracellular portion of the chain corresponds to 22–111 (QDDTEQNPYE…RVCKNCMEVN (90 aa)). The Ig-like domain maps to 27 to 98 (QNPYEVSISG…GNTEAAHTLY (72 aa)). C43 and C84 are oxidised to a cystine. A helical transmembrane segment spans residues 112–137 (LLEVATIIVVDICVTLGLLLLVYYWS). The Cytoplasmic segment spans residues 138-192 (KSRKAKATPMTRGAGAGGRPRGQNRERPPPVPNPDYEPIRKGQRDLYSGLNQRGV). The tract at residues 146–192 (PMTRGAGAGGRPRGQNRERPPPVPNPDYEPIRKGQRDLYSGLNQRGV) is disordered. Residues 160 to 177 (QNRERPPPVPNPDYEPIR) form an NUMB-binding region region. Residues 163-190 (ERPPPVPNPDYEPIRKGQRDLYSGLNQR) form the ITAM domain. Residues 164–171 (RPPPVPNP) are proline-rich sequence. Phosphotyrosine occurs at positions 173 and 184.

As to quaternary structure, the TCR-CD3 complex is composed of a CD3D/CD3E and a CD3G/CD3E heterodimers that preferentially associate with TCRalpha and TCRbeta, respectively, to form TCRalpha/CD3E/CD3G and TCRbeta/CD3G/CD3E trimers. In turn, the hexamer interacts with CD3Z homodimer to form the TCR-CD3 complex. Alternatively, TCRalpha and TCRbeta can be replaced by TCRgamma and TCRdelta. Interacts with CD6. Interacts (via Proline-rich sequence) with NCK1; the interaction is ligand dependent but independent of tyrosine kinase activation. In terms of processing, phosphorylated on Tyr residues after T-cell receptor triggering by LCK in association with CD4/CD8.

It is found in the cell membrane. In terms of biological role, part of the TCR-CD3 complex present on T-lymphocyte cell surface that plays an essential role in adaptive immune response. When antigen presenting cells (APCs) activate T-cell receptor (TCR), TCR-mediated signals are transmitted across the cell membrane by the CD3 chains CD3D, CD3E, CD3G and CD3Z. All CD3 chains contain immunoreceptor tyrosine-based activation motifs (ITAMs) in their cytoplasmic domain. Upon TCR engagement, these motifs become phosphorylated by Src family protein tyrosine kinases LCK and FYN, resulting in the activation of downstream signaling pathways. In addition of this role of signal transduction in T-cell activation, CD3E plays an essential role in correct T-cell development. Also participates in internalization and cell surface down-regulation of TCR-CD3 complexes via endocytosis sequences present in CD3E cytosolic region. In addition to its role as a TCR coreceptor, it serves as a receptor for ITPRIPL1. Ligand recognition inhibits T-cell activation by promoting interaction with NCK1, which prevents CD3E-ZAP70 interaction and blocks the ERK-NFkB signaling cascade and calcium influx. The chain is T-cell surface glycoprotein CD3 epsilon chain (CD3E) from Ovis aries (Sheep).